We begin with the raw amino-acid sequence, 66 residues long: Large ribosomal subunit protein bL35 (66 aa).

Basic residues predominate over residues 1–28 (MPKMKTHRGSAKRFKRTGSGKLKRRHGF). The disordered stretch occupies residues 1-50 (MPKMKTHRGSAKRFKRTGSGKLKRRHGFTSHMFANKSQKQKRKLRKSAMV).

This sequence belongs to the bacterial ribosomal protein bL35 family.

The sequence is that of Large ribosomal subunit protein bL35 from Listeria monocytogenes serotype 4a (strain HCC23).